Reading from the N-terminus, the 180-residue chain is NADH-quinone oxidoreductase subunit I (180 aa).

2 4Fe-4S ferredoxin-type domains span residues 48–80 and 90–119; these read IVLT…LQKA and EFFR…LTPD. [4Fe-4S] cluster-binding residues include Cys60, Cys63, Cys66, Cys70, Cys99, Cys102, Cys105, and Cys109.

The protein belongs to the complex I 23 kDa subunit family. As to quaternary structure, NDH-1 is composed of 13 different subunits. Subunits NuoA, H, J, K, L, M, N constitute the membrane sector of the complex. [4Fe-4S] cluster serves as cofactor.

Its subcellular location is the cell inner membrane. It carries out the reaction a quinone + NADH + 5 H(+)(in) = a quinol + NAD(+) + 4 H(+)(out). NDH-1 shuttles electrons from NADH, via FMN and iron-sulfur (Fe-S) centers, to quinones in the respiratory chain. The immediate electron acceptor for the enzyme in this species is believed to be ubiquinone. Couples the redox reaction to proton translocation (for every two electrons transferred, four hydrogen ions are translocated across the cytoplasmic membrane), and thus conserves the redox energy in a proton gradient. The protein is NADH-quinone oxidoreductase subunit I of Edwardsiella ictaluri (strain 93-146).